Here is a 129-residue protein sequence, read N- to C-terminus: Flagellar assembly factor FliW 2 (129 aa).

Belongs to the FliW family. Interacts with translational regulator CsrA and flagellin(s).

Its subcellular location is the cytoplasm. In terms of biological role, acts as an anti-CsrA protein, binds CsrA and prevents it from repressing translation of its target genes, one of which is flagellin. Binds to flagellin and participates in the assembly of the flagellum. This chain is Flagellar assembly factor FliW 2, found in Helicobacter pylori (strain J99 / ATCC 700824) (Campylobacter pylori J99).